The primary structure comprises 746 residues: MDKYKVAGKFGLPDITVAEMESLASFCEAVLPSVQPPPEELSGEGDNHRNKEALRSFYSTSGSKTPVLRQSIELVTKRGTIEAYIATRLILFLLATRLGTLLICGTECLVSRWPFVEKFSELSLEKRERVLQKQFKNWILTPIRAAFVYIKVAFLFCFFSRVNPNGENPAWEAIGYRVNPDENKPSETHNERPLEKGIVETMEETEQTLLESLAHKGLEAVLDTEHDAIRIKCDVVVVGSGSGGGVAASVLAKSGLKVVVLEKGSYFTPSEHRPFEGPGLDKLYENGGILPSVDGSFMVLAGATVGGGSAVNWSACIKTPKSVLQEWSEDQNIPLFGTKEYLTAMEVVWKRMGVTEKCELESFQNQILRKGCENLGFNVENVPRNSSESHYCGSCGYGCRQGDKKGSDRTWLVDAVGHGAVILTGCKAERFILEKNGSNKGGKQMKCLGVMAKSLNGNIAKMLKIEAKVTVSAGGALLTPPLMISSGLRNRNIGKNLHLHPVLMAWGYFPDKESSNISFKGNSYEGGIITSVSKVLSEDSEVRAIIETPQLGPGSFSVLTPWTSGLDMKKRMARYSRTASLITIVRDRGSGEVKTEGRINYTVDKTDRDNLKAGLRESLRILIAAGAEEVGTHRSDGQRLICKGVNENSIQEFLDSVSTEEGAKGMTEKWNVYSSAHQMGSCRIGENEKEGAIDLNGESWEAEKLFVCDASALPSAVGVNPMITVMSTAYCISTRIAKSMTTGLSH.

A helical membrane pass occupies residues 139–159 (ILTPIRAAFVYIKVAFLFCFF). 233–248 (CDVVVVGSGSGGGVAA) lines the FAD pocket. Catalysis depends on H677, which acts as the Proton acceptor.

Belongs to the GMC oxidoreductase family.

The protein resides in the membrane. The enzyme catalyses a long-chain primary fatty alcohol + O2 = a long-chain fatty aldehyde + H2O2. Long-chain fatty alcohol oxidase involved in the omega-oxidation pathway of lipid degradation. This Arabidopsis thaliana (Mouse-ear cress) protein is Long-chain-alcohol oxidase FAO3 (FAO3).